The sequence spans 77 residues: Conotoxin Vc6.14 (77 aa).

An N-terminal signal peptide occupies residues 1-19; it reads MEKLTILLLVAAVLMSTQA. Positions 20–37 are excised as a propeptide; sequence MFQGGGEKRPKDKIKFLS. 3 disulfide bridges follow: Cys51–Cys65, Cys58–Cys69, and Cys64–Cys74.

It belongs to the conotoxin O2 superfamily. Expressed by the venom duct.

The protein resides in the secreted. Inhibits voltage-gated ion channels. This is Conotoxin Vc6.14 from Conus victoriae (Queen Victoria cone).